Reading from the N-terminus, the 310-residue chain is Oxygen-dependent coproporphyrinogen-III oxidase (310 aa).

Ser-92 contributes to the substrate binding site. Positions 96 and 106 each coordinate a divalent metal cation. The Proton donor role is filled by His-106. 108–110 (NVR) contacts substrate. A divalent metal cation contacts are provided by His-145 and His-175. Residues 240–275 (YVEFNLIWDRGTLFGLQSGGRTESILMSMPPLARWE) form an important for dimerization region. A substrate-binding site is contributed by 258-260 (GGR).

Belongs to the aerobic coproporphyrinogen-III oxidase family. Homodimer. A divalent metal cation serves as cofactor.

It is found in the cytoplasm. It catalyses the reaction coproporphyrinogen III + O2 + 2 H(+) = protoporphyrinogen IX + 2 CO2 + 2 H2O. Its pathway is porphyrin-containing compound metabolism; protoporphyrin-IX biosynthesis; protoporphyrinogen-IX from coproporphyrinogen-III (O2 route): step 1/1. Involved in the heme biosynthesis. Catalyzes the aerobic oxidative decarboxylation of propionate groups of rings A and B of coproporphyrinogen-III to yield the vinyl groups in protoporphyrinogen-IX. The chain is Oxygen-dependent coproporphyrinogen-III oxidase from Pectobacterium atrosepticum (strain SCRI 1043 / ATCC BAA-672) (Erwinia carotovora subsp. atroseptica).